A 303-amino-acid polypeptide reads, in one-letter code: Diaminopimelate epimerase (303 aa).

Substrate is bound by residues Asn15, Gln47, and Asn67. Cys76 functions as the Proton donor in the catalytic mechanism. Substrate is bound by residues 77–78, Asn163, Asn197, and 215–216; these read GN and ER. The Proton acceptor role is filled by Cys224. Position 225 to 226 (225 to 226) interacts with substrate; it reads GS. The tract at residues 278 to 303 is disordered; it reads FDPATGEWSRDTQGLQGSGNADRGAA.

This sequence belongs to the diaminopimelate epimerase family. As to quaternary structure, homodimer.

It localises to the cytoplasm. It carries out the reaction (2S,6S)-2,6-diaminopimelate = meso-2,6-diaminopimelate. It participates in amino-acid biosynthesis; L-lysine biosynthesis via DAP pathway; DL-2,6-diaminopimelate from LL-2,6-diaminopimelate: step 1/1. Functionally, catalyzes the stereoinversion of LL-2,6-diaminopimelate (L,L-DAP) to meso-diaminopimelate (meso-DAP), a precursor of L-lysine and an essential component of the bacterial peptidoglycan. This is Diaminopimelate epimerase from Brucella abortus (strain S19).